We begin with the raw amino-acid sequence, 171 residues long: 3-hydroxydecanoyl-[acyl-carrier-protein] dehydratase (171 aa).

His-71 is an active-site residue.

The protein belongs to the thioester dehydratase family. FabA subfamily. As to quaternary structure, homodimer.

The protein resides in the cytoplasm. It catalyses the reaction a (3R)-hydroxyacyl-[ACP] = a (2E)-enoyl-[ACP] + H2O. The enzyme catalyses (3R)-hydroxydecanoyl-[ACP] = (2E)-decenoyl-[ACP] + H2O. The catalysed reaction is (2E)-decenoyl-[ACP] = (3Z)-decenoyl-[ACP]. It participates in lipid metabolism; fatty acid biosynthesis. Its function is as follows. Necessary for the introduction of cis unsaturation into fatty acids. Catalyzes the dehydration of (3R)-3-hydroxydecanoyl-ACP to E-(2)-decenoyl-ACP and then its isomerization to Z-(3)-decenoyl-ACP. Can catalyze the dehydratase reaction for beta-hydroxyacyl-ACPs with saturated chain lengths up to 16:0, being most active on intermediate chain length. In Hamiltonella defensa subsp. Acyrthosiphon pisum (strain 5AT), this protein is 3-hydroxydecanoyl-[acyl-carrier-protein] dehydratase.